We begin with the raw amino-acid sequence, 344 residues long: Ferrochelatase (344 aa).

Fe cation is bound by residues His-214 and Glu-295.

Belongs to the ferrochelatase family.

Its subcellular location is the cytoplasm. It carries out the reaction heme b + 2 H(+) = protoporphyrin IX + Fe(2+). The protein operates within porphyrin-containing compound metabolism; protoheme biosynthesis; protoheme from protoporphyrin-IX: step 1/1. Catalyzes the ferrous insertion into protoporphyrin IX. The chain is Ferrochelatase from Rhizobium etli (strain ATCC 51251 / DSM 11541 / JCM 21823 / NBRC 15573 / CFN 42).